We begin with the raw amino-acid sequence, 286 residues long: MMSVIPAQWQPYWQLARLDKPIGTLLLLWPTLWALWLASAGVPSFSLLLIFTAGVFVMRSAGCVINDYADRKFDGYVKRTASRPLPAGRLTAVRALLFFLLLVLIAFVLVWQLNQFTIYLSVGGLLLAAIYPFMKRVTSLPQVVLGMAFSWAIPMAYGAVVGQLTVTTWLLFLANLVWTIAYDTMYAMVDRDDDLKIGVKSTAILFGQNDRLYIALLQLGTLTLLAIIGWLEQLTVSYYFSLLLAAGLFIYQQWLIRHRQRDACFRAFLNNNWVGMLIFAGIMLAC.

Transmembrane regions (helical) follow at residues 22-42 (IGTL…SAGV), 45-65 (FSLL…GCVI), 90-110 (LTAV…FVLV), 113-133 (LNQF…IYPF), 142-162 (QVVL…AVVG), 169-189 (WLLF…YAMV), 212-232 (LYIA…GWLE), 236-256 (VSYY…QWLI), and 265-285 (FRAF…IMLA).

This sequence belongs to the UbiA prenyltransferase family. Mg(2+) serves as cofactor.

The protein resides in the cell inner membrane. It catalyses the reaction all-trans-octaprenyl diphosphate + 4-hydroxybenzoate = 4-hydroxy-3-(all-trans-octaprenyl)benzoate + diphosphate. The protein operates within cofactor biosynthesis; ubiquinone biosynthesis. Catalyzes the prenylation of para-hydroxybenzoate (PHB) with an all-trans polyprenyl group. Mediates the second step in the final reaction sequence of ubiquinone-8 (UQ-8) biosynthesis, which is the condensation of the polyisoprenoid side chain with PHB, generating the first membrane-bound Q intermediate 3-octaprenyl-4-hydroxybenzoate. The polypeptide is 4-hydroxybenzoate octaprenyltransferase (Tolumonas auensis (strain DSM 9187 / NBRC 110442 / TA 4)).